Here is a 337-residue protein sequence, read N- to C-terminus: 1-aminocyclopropane-1-carboxylate deaminase (337 aa).

Lysine 50 carries the post-translational modification N6-(pyridoxal phosphate)lysine.

It belongs to the ACC deaminase/D-cysteine desulfhydrase family. In terms of assembly, homotrimer. Pyridoxal 5'-phosphate is required as a cofactor.

The enzyme catalyses 1-aminocyclopropane-1-carboxylate + H2O = 2-oxobutanoate + NH4(+). Functionally, catalyzes a cyclopropane ring-opening reaction, the irreversible conversion of 1-aminocyclopropane-1-carboxylate (ACC) to ammonia and alpha-ketobutyrate. Allows growth on ACC as a nitrogen source. The chain is 1-aminocyclopropane-1-carboxylate deaminase from Mesorhizobium japonicum (strain LMG 29417 / CECT 9101 / MAFF 303099) (Mesorhizobium loti (strain MAFF 303099)).